Here is a 147-residue protein sequence, read N- to C-terminus: Small ribosomal subunit protein uS12 (147 aa).

This sequence belongs to the universal ribosomal protein uS12 family. As to quaternary structure, part of the 30S ribosomal subunit.

With S4 and S5 plays an important role in translational accuracy. Located at the interface of the 30S and 50S subunits. The polypeptide is Small ribosomal subunit protein uS12 (Methanococcus vannielii (strain ATCC 35089 / DSM 1224 / JCM 13029 / OCM 148 / SB)).